The following is a 130-amino-acid chain: MIYGIGTDIIKIARIEAALGRHGDRFAERVLGVEELEKYHRRKAKVAARGLRFLATRFAAKEAFSKAIGLGMHMPMTWRAAQILNAPSGQPIVVTSGKLAEFMQENGLTAQVSITDEVEYAVAFVIVEKK.

Residues aspartate 8 and glutamate 62 each contribute to the Mg(2+) site.

This sequence belongs to the P-Pant transferase superfamily. AcpS family. It depends on Mg(2+) as a cofactor.

Its subcellular location is the cytoplasm. The catalysed reaction is apo-[ACP] + CoA = holo-[ACP] + adenosine 3',5'-bisphosphate + H(+). Its function is as follows. Transfers the 4'-phosphopantetheine moiety from coenzyme A to a Ser of acyl-carrier-protein. The polypeptide is Holo-[acyl-carrier-protein] synthase (Herminiimonas arsenicoxydans).